Reading from the N-terminus, the 153-residue chain is Putative ubiquitin-conjugating enzyme E2 N-like (153 aa).

The UBC core domain maps to 3-150; sequence ELPHRIIKET…ARAWTRLYAM (148 aa). N6-acetyllysine is present on lysine 83.

The protein belongs to the ubiquitin-conjugating enzyme family. In terms of tissue distribution, expressed in epididymis (at protein level).

This chain is Putative ubiquitin-conjugating enzyme E2 N-like (UBE2NL), found in Homo sapiens (Human).